Reading from the N-terminus, the 512-residue chain is 2-isopropylmalate synthase (512 aa).

The Pyruvate carboxyltransferase domain occupies 5 to 268 (LIIFDTTLRD…DLGIATQHIL (264 aa)). Mn(2+)-binding residues include Asp-14, His-202, His-204, and Asn-239. Positions 394–512 (GFVSLFQQSE…NKADRVAAQG (119 aa)) are regulatory domain.

The protein belongs to the alpha-IPM synthase/homocitrate synthase family. LeuA type 1 subfamily. As to quaternary structure, homodimer. Mn(2+) serves as cofactor.

The protein localises to the cytoplasm. It catalyses the reaction 3-methyl-2-oxobutanoate + acetyl-CoA + H2O = (2S)-2-isopropylmalate + CoA + H(+). The protein operates within amino-acid biosynthesis; L-leucine biosynthesis; L-leucine from 3-methyl-2-oxobutanoate: step 1/4. Catalyzes the condensation of the acetyl group of acetyl-CoA with 3-methyl-2-oxobutanoate (2-ketoisovalerate) to form 3-carboxy-3-hydroxy-4-methylpentanoate (2-isopropylmalate). The protein is 2-isopropylmalate synthase of Verminephrobacter eiseniae (strain EF01-2).